The chain runs to 126 residues: Small ribosomal subunit protein uS12m (126 aa).

2 disordered regions span residues 1–27 (MPTM…LNKC) and 106–126 (GIPG…KDYI). Composition is skewed to basic residues over residues 12-23 (RESKRRTKRTRA) and 109-120 (GRRRGRSKYGTK).

It belongs to the universal ribosomal protein uS12 family.

It is found in the mitochondrion. Protein S12 is involved in the translation initiation step. The sequence is that of Small ribosomal subunit protein uS12m (RPS12) from Marchantia polymorpha (Common liverwort).